A 23-amino-acid chain; its full sequence is Basic phospholipase A2 CTs-G6 (23 aa).

Ca(2+) serves as cofactor. Post-translationally, contains 7 disulfide bonds. In terms of tissue distribution, expressed by the venom gland.

Its subcellular location is the secreted. It catalyses the reaction a 1,2-diacyl-sn-glycero-3-phosphocholine + H2O = a 1-acyl-sn-glycero-3-phosphocholine + a fatty acid + H(+). Its function is as follows. Snake venom phospholipase A2 (PLA2) that induces local edema a few hours after injection (5-10 ug) in the hind paw. PLA2 catalyzes the calcium-dependent hydrolysis of the 2-acyl groups in 3-sn-phosphoglycerides. In Trimeresurus stejnegeri (Chinese green tree viper), this protein is Basic phospholipase A2 CTs-G6.